The sequence spans 216 residues: GTP cyclohydrolase 1 (216 aa).

Residues cysteine 108, histidine 111, and cysteine 179 each contribute to the Zn(2+) site.

Belongs to the GTP cyclohydrolase I family. Homomer.

The enzyme catalyses GTP + H2O = 7,8-dihydroneopterin 3'-triphosphate + formate + H(+). It participates in cofactor biosynthesis; 7,8-dihydroneopterin triphosphate biosynthesis; 7,8-dihydroneopterin triphosphate from GTP: step 1/1. The chain is GTP cyclohydrolase 1 from Shewanella baltica (strain OS223).